A 92-amino-acid polypeptide reads, in one-letter code: Small ribosomal subunit protein uS19 (92 aa).

This sequence belongs to the universal ribosomal protein uS19 family.

In terms of biological role, protein S19 forms a complex with S13 that binds strongly to the 16S ribosomal RNA. The protein is Small ribosomal subunit protein uS19 of Treponema denticola (strain ATCC 35405 / DSM 14222 / CIP 103919 / JCM 8153 / KCTC 15104).